The following is a 244-amino-acid chain: PF03932 family protein CutC (244 aa).

This sequence belongs to the CutC family.

The protein resides in the cytoplasm. In Pasteurella multocida (strain Pm70), this protein is PF03932 family protein CutC.